The primary structure comprises 218 residues: Small ribosomal subunit protein uS3c (218 aa).

The KH type-2 domain maps to 47–118 (VRRHMKNYSN…KLNISIAKVA (72 aa)).

This sequence belongs to the universal ribosomal protein uS3 family. In terms of assembly, part of the 30S ribosomal subunit.

It localises to the plastid. Its subcellular location is the chloroplast. This is Small ribosomal subunit protein uS3c (rps3) from Ginkgo biloba (Ginkgo).